We begin with the raw amino-acid sequence, 68 residues long: MGDPAAYRDSTQIVLPVGTLEDIEVDLEAEFMVSVFRPTDAEIVRIIGSPVVIKEVTEFLTRHGVHMP.

This chain is Protein VNG_1110C, found in Halobacterium salinarum (strain ATCC 700922 / JCM 11081 / NRC-1) (Halobacterium halobium).